The primary structure comprises 94 residues: MICOS complex subunit MIC12 (94 aa).

A helical transmembrane segment spans residues Tyr7–Tyr23.

It belongs to the MICOS complex subunit Mic12 family. As to quaternary structure, component of the mitochondrial contact site and cristae organizing system (MICOS) complex.

It localises to the mitochondrion inner membrane. Its function is as follows. Component of the MICOS complex, a large protein complex of the mitochondrial inner membrane that plays crucial roles in the maintenance of crista junctions, inner membrane architecture, and formation of contact sites to the outer membrane. The chain is MICOS complex subunit MIC12 (AIM5) from Eremothecium gossypii (strain ATCC 10895 / CBS 109.51 / FGSC 9923 / NRRL Y-1056) (Yeast).